We begin with the raw amino-acid sequence, 895 residues long: DNA mismatch repair protein MutS (895 aa).

607–614 (GPNMSGKS) lines the ATP pocket.

It belongs to the DNA mismatch repair MutS family.

Its function is as follows. This protein is involved in the repair of mismatches in DNA. It is possible that it carries out the mismatch recognition step. This protein has a weak ATPase activity. The sequence is that of DNA mismatch repair protein MutS from Bacillus cytotoxicus (strain DSM 22905 / CIP 110041 / 391-98 / NVH 391-98).